We begin with the raw amino-acid sequence, 454 residues long: MSFVPGQENAGGRSSSGNRAGNGILKKTTWADQTERGPNNQNRGRRNQPKQTATTQPNSGSVVPHYSWFSGITQFQKGKEFQFAEGQGVPIANGIPASEQKGYWYRHNRRSFKTPDGQQKQLLPRWYFYYLGTGPHAGASYGDSIEGVFWVANSQADTNTRSDIVERDPSSHEAIPTRFAPGTVLPQGFYVEGSGRSAPASRSGSRSQSRGPNNRARSSSNQRQPASTVKPDMAEEIAALVLAKLGKDAGQPKQVTKQSAKEVRQKILNKPRQKRTPNKQCPVQQCFGKRGPNQNFGGSEMLKLGTSDPQFPILAELAPTVGAFFFGSKLELVKKNSGGADEPTKDVYELQYSGAVRFDSTLPGFETIMKVLNENLNAYQKDGGADVVSPKPQRKGRRQAQEKKDEVDNVSVAKPKSSVQRNVSRELTPEDRSLLAQILDDGVVPDGLEDDSNV.

The segment at 1 to 62 (MSFVPGQENA…ATTQPNSGSV (62 aa)) is disordered. Residues 10-23 (AGGRSSSGNRAGNG) are compositionally biased toward low complexity. Positions 50–61 (KQTATTQPNSGS) are enriched in polar residues. Residues 56–197 (QPNSGSVVPH…GFYVEGSGRS (142 aa)) form an RNA-binding region. The region spanning 64 to 193 (PHYSWFSGIT…VLPQGFYVEG (130 aa)) is the CoV N NTD domain. RNA-binding residues include arginine 109 and arginine 125. Disordered stretches follow at residues 160–179 (TRSDIVERDPSSHEAIPTRF), 186–230 (PQGF…STVK), 271–292 (PRQKRTPNKQCPVQQCFGKRGP), and 382–428 (DGGA…RELT). The residue at position 162 (serine 162) is a Phosphoserine; by host. Arginine 167 provides a ligand contact to RNA. Serine 170 carries the phosphoserine; by host modification. At threonine 177 the chain carries Phosphothreonine; by host. Over residues 193–212 (GSGRSAPASRSGSRSQSRGP) the composition is skewed to low complexity. Position 194 is a phosphoserine; by host (serine 194). A compositionally biased stretch (polar residues) spans 215-227 (RARSSSNQRQPAS). Positions 260–383 (AKEVRQKILN…ENLNAYQKDG (124 aa)) constitute a CoV N CTD domain. The interval 267 to 383 (ILNKPRQKRT…ENLNAYQKDG (117 aa)) is dimerization. Phosphoserine; by host occurs at positions 389 and 424. Threonine 428 carries the post-translational modification Phosphothreonine; by host.

Belongs to the betacoronavirus nucleocapsid protein family. As to quaternary structure, homooligomer. Both monomeric and oligomeric forms interact with RNA. Interacts with protein M. Interacts with NSP3; this interaction serves to tether the genome to the newly translated replicase-transcriptase complex at a very early stage of infection. ADP-ribosylated. The ADP-ribosylation is retained in the virion during infection. In terms of processing, phosphorylated on serine and threonine residues.

The protein resides in the virion. It is found in the host endoplasmic reticulum-Golgi intermediate compartment. Its subcellular location is the host Golgi apparatus. In terms of biological role, major structural component of virions that associates with genomic RNA to form a long, flexible, helical nucleocapsid. Interaction with the M protein leads to the formation of virus particles. Binds to cellular membranes and phospholipids. Elicits cell-mediated immunity. May play roles in viral transcription and translation, and/or replication. Induces transcription of the prothrombinase (FGL2) and elevates procoagulant activity. Its function is as follows. Packages the positive strand viral genome RNA into a helical ribonucleocapsid (RNP) and plays a fundamental role during virion assembly through its interactions with the viral genome and membrane protein M. Plays an important role in enhancing the efficiency of subgenomic viral RNA transcription as well as viral replication. This Mus musculus (Mouse) protein is Nucleoprotein.